A 64-amino-acid chain; its full sequence is Large ribosomal subunit protein bL35 (64 aa).

This sequence belongs to the bacterial ribosomal protein bL35 family.

This chain is Large ribosomal subunit protein bL35, found in Pseudomonas entomophila (strain L48).